The sequence spans 337 residues: MQRLVEIERFDSEESVEVTLRPSAWNEYIGQEQIKKNLGVFIEASKKRAEALDHVLFYGPPGLGKTTLALIIANEMNANIKVTAAPMIEKSGDLAAILTNLEEGDVLFIDEIHRLSPAVEEILYSSMEDFRIDIIIGSGPAAQTLKIDLPRFTLIGATTRAGMLSNPLRDRFGMNFRMQFYSPEELSKIISQASNKLNKKIADEACSEIAKRSRGTPRIALRLLRRVRDFADVANEKDILHSRAQYALDELGINSYGFDEMDIKLLNLLVGANGRAMGLSTIAAALSEDEGTVEDVLEPYLIANGYLERTAKGRKATPSTYKILNVTMPALDDGGLF.

Positions Met1–Tyr181 are large ATPase domain (RuvB-L). ATP-binding positions include Leu20, Arg21, Gly62, Lys65, Thr66, Thr67, Glu128–Phe130, Arg171, Tyr181, and Arg218. Residue Thr66 participates in Mg(2+) binding. The segment at Ser182 to Gly252 is small ATPAse domain (RuvB-S). A head domain (RuvB-H) region spans residues Ser255 to Phe337. Positions 309 and 314 each coordinate DNA.

Belongs to the RuvB family. As to quaternary structure, homohexamer. Forms an RuvA(8)-RuvB(12)-Holliday junction (HJ) complex. HJ DNA is sandwiched between 2 RuvA tetramers; dsDNA enters through RuvA and exits via RuvB. An RuvB hexamer assembles on each DNA strand where it exits the tetramer. Each RuvB hexamer is contacted by two RuvA subunits (via domain III) on 2 adjacent RuvB subunits; this complex drives branch migration. In the full resolvosome a probable DNA-RuvA(4)-RuvB(12)-RuvC(2) complex forms which resolves the HJ.

It is found in the cytoplasm. The catalysed reaction is ATP + H2O = ADP + phosphate + H(+). Functionally, the RuvA-RuvB-RuvC complex processes Holliday junction (HJ) DNA during genetic recombination and DNA repair, while the RuvA-RuvB complex plays an important role in the rescue of blocked DNA replication forks via replication fork reversal (RFR). RuvA specifically binds to HJ cruciform DNA, conferring on it an open structure. The RuvB hexamer acts as an ATP-dependent pump, pulling dsDNA into and through the RuvAB complex. RuvB forms 2 homohexamers on either side of HJ DNA bound by 1 or 2 RuvA tetramers; 4 subunits per hexamer contact DNA at a time. Coordinated motions by a converter formed by DNA-disengaged RuvB subunits stimulates ATP hydrolysis and nucleotide exchange. Immobilization of the converter enables RuvB to convert the ATP-contained energy into a lever motion, pulling 2 nucleotides of DNA out of the RuvA tetramer per ATP hydrolyzed, thus driving DNA branch migration. The RuvB motors rotate together with the DNA substrate, which together with the progressing nucleotide cycle form the mechanistic basis for DNA recombination by continuous HJ branch migration. Branch migration allows RuvC to scan DNA until it finds its consensus sequence, where it cleaves and resolves cruciform DNA. This chain is Holliday junction branch migration complex subunit RuvB, found in Sulfurimonas denitrificans (strain ATCC 33889 / DSM 1251) (Thiomicrospira denitrificans (strain ATCC 33889 / DSM 1251)).